The primary structure comprises 219 residues: Cell division protein B2 (219 aa).

Functionally, part of a cell division machinery. The sequence is that of Cell division protein B2 from Sulfolobus acidocaldarius (strain ATCC 33909 / DSM 639 / JCM 8929 / NBRC 15157 / NCIMB 11770).